Reading from the N-terminus, the 1368-residue chain is DNA-directed RNA polymerase subunit beta (1368 aa).

This sequence belongs to the RNA polymerase beta chain family. In terms of assembly, the RNAP catalytic core consists of 2 alpha, 1 beta, 1 beta' and 1 omega subunit. When a sigma factor is associated with the core the holoenzyme is formed, which can initiate transcription.

The catalysed reaction is RNA(n) + a ribonucleoside 5'-triphosphate = RNA(n+1) + diphosphate. DNA-dependent RNA polymerase catalyzes the transcription of DNA into RNA using the four ribonucleoside triphosphates as substrates. The polypeptide is DNA-directed RNA polymerase subunit beta (Burkholderia ambifaria (strain ATCC BAA-244 / DSM 16087 / CCUG 44356 / LMG 19182 / AMMD) (Burkholderia cepacia (strain AMMD))).